Here is a 498-residue protein sequence, read N- to C-terminus: ATP synthase subunit beta, chloroplastic (498 aa).

172-179 provides a ligand contact to ATP; that stretch reads GGAGVGKT.

This sequence belongs to the ATPase alpha/beta chains family. F-type ATPases have 2 components, CF(1) - the catalytic core - and CF(0) - the membrane proton channel. CF(1) has five subunits: alpha(3), beta(3), gamma(1), delta(1), epsilon(1). CF(0) has four main subunits: a(1), b(1), b'(1) and c(9-12).

Its subcellular location is the plastid. It is found in the chloroplast thylakoid membrane. It carries out the reaction ATP + H2O + 4 H(+)(in) = ADP + phosphate + 5 H(+)(out). Produces ATP from ADP in the presence of a proton gradient across the membrane. The catalytic sites are hosted primarily by the beta subunits. The sequence is that of ATP synthase subunit beta, chloroplastic from Phormium tenax (New Zealand flax).